The sequence spans 149 residues: Large ribosomal subunit protein bL9 (149 aa).

The protein belongs to the bacterial ribosomal protein bL9 family.

Functionally, binds to the 23S rRNA. The sequence is that of Large ribosomal subunit protein bL9 from Helicobacter pylori (strain G27).